We begin with the raw amino-acid sequence, 415 residues long: Probable RAD2-like endonuclease 369L (415 aa).

Residues 1-114 (MGIKNLTKFI…EDVKKKTLSL (114 aa)) form an N-domain region. Asp-34, Glu-86, Glu-198, Glu-200, Asp-219, Asp-221, and Asp-277 together coordinate Mg(2+). Residues 163–297 (VKQRHRYDIR…VKSYELIKVQ (135 aa)) are I-domain.

Belongs to the XPG/RAD2 endonuclease family. Mg(2+) serves as cofactor.

It is found in the host nucleus. In terms of biological role, probable endonuclease. In Acheta domesticus (House cricket), this protein is Probable RAD2-like endonuclease 369L.